A 709-amino-acid polypeptide reads, in one-letter code: Nucleobase-ascorbate transporter 12 (709 aa).

Residues 1 to 145 (MSSSDPKPGP…GSGDPVRRPG (145 aa)) are disordered. Over residues 7–19 (KPGPKPGPWPPTP) the composition is skewed to pro residues. Position 40 is a phosphoserine (Ser40). Residues 41 to 53 (GETTATDSSSGQL) are compositionally biased toward polar residues. Basic and acidic residues-rich tracts occupy residues 89-98 (ETDKDKKEKP) and 113-122 (QPVKRRRDSD). Transmembrane regions (helical) follow at residues 190–210 (YLSMLGSLILVPLVIVPAMGG), 218–238 (VVSTVLFVSGITTLLHTSFGS), 240–260 (LPLIQGPSFVFLAPALAIINS), 283–303 (IIIGSAFQAVLGYSGLMSLIL), 308–328 (PVVVAPTVAAVGLSFYSYGFP), 329–349 (LVGKCLEIGVVQILLVIIFAL), 361–381 (IFLIYAVPLSLAITWAAAFLL), 438–458 (WGVPLFNWKMAFVMCVVSVIA), 530–550 (GACVLVIFSLVGKVGGFLASI), 551–571 (PQVMVASLLCFMWAMFTALGL), 585–605 (IIIVGLSLFFSLSVPAYFQQY), and 639–659 (YVMNTLLSMSMVIAFIMAVIL).

The protein belongs to the nucleobase:cation symporter-2 (NCS2) (TC 2.A.40) family. Ubiquitous.

It localises to the cell membrane. This Arabidopsis thaliana (Mouse-ear cress) protein is Nucleobase-ascorbate transporter 12 (NAT12).